A 171-amino-acid polypeptide reads, in one-letter code: Laminin subunit beta-1 (171 aa).

The N-terminal stretch at 1–29 (MNGRTQNLWFSTFRLVIVYALFFAKLCFG) is a signal peptide. Disulfide bonds link C59-C69, C72-C81, C84-C100, C103-C118, and C105-C128. Laminin EGF-like domains are found at residues 66-102 (TGVC…VCQR), 103-160 (CQCP…TCKK), and 161-171 (CLCNGNINSAS). N130 carries N-linked (GlcNAc...) asparagine glycosylation. 2 disulfides stabilise this stretch: C131–C140 and C143–C158.

As to quaternary structure, laminin is a complex glycoprotein, consisting of three different polypeptide chains (alpha, beta, gamma), which are bound to each other by disulfide bonds into a cross-shaped molecule comprising one long and three short arms with globules at each end.

It localises to the secreted. It is found in the extracellular space. The protein resides in the extracellular matrix. Its subcellular location is the basement membrane. Binding to cells via a high affinity receptor, laminin is thought to mediate the attachment, migration and organization of cells into tissues during embryonic development by interacting with other extracellular matrix components. This is Laminin subunit beta-1 from Hydra vulgaris (Hydra).